We begin with the raw amino-acid sequence, 416 residues long: Adenylosuccinate synthetase (416 aa).

Residues 13 to 19 (GDEGKGK) and 41 to 43 (GHT) each bind GTP. Aspartate 14 (proton acceptor) is an active-site residue. Mg(2+) is bound by residues aspartate 14 and glycine 41. IMP is bound by residues 14–17 (DEGK), 39–42 (NAGH), threonine 126, arginine 140, glutamine 220, threonine 235, and arginine 299. Histidine 42 (proton donor) is an active-site residue. Residue 295–301 (TTTGRRR) coordinates substrate. Residues arginine 301, 327–329 (KLD), and 405–407 (STS) contribute to the GTP site.

Belongs to the adenylosuccinate synthetase family. In terms of assembly, homodimer. Requires Mg(2+) as cofactor.

Its subcellular location is the cytoplasm. The enzyme catalyses IMP + L-aspartate + GTP = N(6)-(1,2-dicarboxyethyl)-AMP + GDP + phosphate + 2 H(+). Its pathway is purine metabolism; AMP biosynthesis via de novo pathway; AMP from IMP: step 1/2. Its function is as follows. Plays an important role in the de novo pathway of purine nucleotide biosynthesis. Catalyzes the first committed step in the biosynthesis of AMP from IMP. This is Adenylosuccinate synthetase from Campylobacter curvus (strain 525.92).